The following is a 430-amino-acid chain: Asparagine--tRNA ligase (430 aa).

The protein belongs to the class-II aminoacyl-tRNA synthetase family. Homodimer.

Its subcellular location is the cytoplasm. It carries out the reaction tRNA(Asn) + L-asparagine + ATP = L-asparaginyl-tRNA(Asn) + AMP + diphosphate + H(+). The polypeptide is Asparagine--tRNA ligase (Staphylococcus epidermidis (strain ATCC 35984 / DSM 28319 / BCRC 17069 / CCUG 31568 / BM 3577 / RP62A)).